The primary structure comprises 237 residues: Ribonuclease 3 (237 aa).

The RNase III domain occupies 5-136 (VDELSARLGV…VIAALFLDQG (132 aa)). Glu49 is a Mg(2+) binding site. The active site involves Asp53. Residues Asp122 and Glu125 each contribute to the Mg(2+) site. The active site involves Glu125. The region spanning 163–232 (DYKSRLQARI…ARAALDALEG (70 aa)) is the DRBM domain. Basic and acidic residues predominate over residues 185–208 (IDRSGPEHRPEFTVEVRAGEERLG). The segment at 185–237 (IDRSGPEHRPEFTVEVRAGEERLGTGKGPSKQAAEQAAARAALDALEGGTDGR) is disordered. The segment covering 216–231 (QAAEQAAARAALDALE) has biased composition (low complexity).

The protein belongs to the ribonuclease III family. Homodimer. The cofactor is Mg(2+).

Its subcellular location is the cytoplasm. The enzyme catalyses Endonucleolytic cleavage to 5'-phosphomonoester.. Digests double-stranded RNA. Involved in the processing of primary rRNA transcript to yield the immediate precursors to the large and small rRNAs (23S and 16S). Processes some mRNAs, and tRNAs when they are encoded in the rRNA operon. Processes pre-crRNA and tracrRNA of type II CRISPR loci if present in the organism. The protein is Ribonuclease 3 of Roseiflexus sp. (strain RS-1).